Reading from the N-terminus, the 587-residue chain is APOBEC1 complementation factor (587 aa).

RRM domains lie at 56-134 (CEIF…ASVD), 136-218 (CRLF…WAEP), and 231-303 (KILY…LAKP). The segment at 360–409 (HFPATKGHLSNRAIIRAPSVRGAAGVRGLGGRGYLAYTGLGRGYQVKGDK) is required for nuclear localization. Residue threonine 491 is modified to Phosphothreonine.

In terms of assembly, part of the apolipoprotein B mRNA editing complex with APOBEC1. Interacts with TNPO2; TNPO2 may be responsible for transport of A1CF into the nucleus. Interacts with SYNCRIP. Interacts with CELF2/CUGBP2. Interacts with RBM47.

The protein resides in the nucleus. It is found in the endoplasmic reticulum. Its subcellular location is the cytoplasm. In terms of biological role, essential component of the apolipoprotein B mRNA editing enzyme complex which is responsible for the postranscriptional editing of a CAA codon for Gln to a UAA codon for stop in APOB mRNA. Binds to APOB mRNA and is probably responsible for docking the catalytic subunit, APOBEC1, to the mRNA to allow it to deaminate its target cytosine. The complex also seems to protect the edited APOB mRNA from nonsense-mediated decay. This Pongo abelii (Sumatran orangutan) protein is APOBEC1 complementation factor (A1CF).